A 153-amino-acid chain; its full sequence is ORM1-like protein 1 (153 aa).

The Cytoplasmic segment spans residues 1–26 (MNVGVAHSEVNPNTRVMNSRGMWLTY). 2 helical membrane passes run 27-46 (ALGVGLLHIVLLSIPFFSVP) and 47-64 (VAWTLTNVIHNLGMYVFL). Topologically, residues 65 to 100 (HAVKGTPFETPDQGKARLLTHWEQLDYGVQFTSSRK) are cytoplasmic. The chain crosses the membrane as a helical span at residues 101-121 (FFTISPIILYFLASFYTKYDT). At 122–123 (TH) the chain is on the extracellular side. Residues 124 to 140 (FILNTASLLSVLIPKMP) form a helical membrane-spanning segment. Topologically, residues 141 to 153 (QLHGVRIFGINKY) are cytoplasmic.

It belongs to the ORM family. Ceramide-sensitive subunit of the serine palmitoyltransferase (SPT) complex, which is also composed of SPTLC1, SPTLC2/3 and SPTSSA/B.

It is found in the endoplasmic reticulum membrane. Its function is as follows. Plays an essential role in the homeostatic regulation of sphingolipid de novo biosynthesis by modulating the activity of the serine palmitoyltransferase (SPT) in response to ceramide levels. When complexed to SPT, the binding of ceramides to its N-terminus stabilizes a conformation that block SPT substrate entry, hence preventing SPT catalytic activity. Through this mechanism, maintains ceramide levels at sufficient concentrations for the production of complex sphingolipids, but which prevents the accumulation of ceramides to levels that trigger apoptosis. The protein is ORM1-like protein 1 (ORMDL1) of Bos taurus (Bovine).